Reading from the N-terminus, the 212-residue chain is Probable GTP-binding protein EngB (212 aa).

An EngB-type G domain is found at 40-212 (SLPEIAFVGK…KASLAKCIKA (173 aa)). Residues 48–55 (GKSNVGKS), 75–79 (GRTRQ), 93–96 (DLPG), 160–163 (TKSD), and 191–193 (VSS) contribute to the GTP site. S55 and T77 together coordinate Mg(2+).

The protein belongs to the TRAFAC class TrmE-Era-EngA-EngB-Septin-like GTPase superfamily. EngB GTPase family. The cofactor is Mg(2+).

Functionally, necessary for normal cell division and for the maintenance of normal septation. The chain is Probable GTP-binding protein EngB from Rickettsia akari (strain Hartford).